Here is an 818-residue protein sequence, read N- to C-terminus: Fibrous sheath CABYR-binding protein (818 aa).

A disordered region spans residues 1–61 (MEEKDESEQS…PKAALSIGNI (61 aa)). Residues serine 25, serine 57, and serine 182 each carry the phosphoserine modification. 2 disordered regions span residues 195-727 (SFSK…PFIT) and 773-805 (LESG…NEGV). 3 stretches are compositionally biased toward low complexity: residues 490-511 (SPPA…PAEE), 544-560 (EAPA…PAEE), and 697-715 (AELQ…VSVE). Basic and acidic residues predominate over residues 773–794 (LESGNLDDKPKSEEPLERDTIP).

Interacts with CABYR. Interacts with ROPN1 and ROPN1L; the interaction increases upon spermatozoa capacitation conditions. Phosphorylated by PKA upon spermatozoa capacitation conditions.

It localises to the cell projection. The protein resides in the cilium. The protein localises to the flagellum. Its function is as follows. May be involved in the later stages of fibrous sheath biogenesis and spermatozoa capacitation. Inhibits ROPN1 and ROPN1L SUMOylation. Binds calcium. The chain is Fibrous sheath CABYR-binding protein from Bos taurus (Bovine).